The sequence spans 311 residues: MNKKSTAIFLMGPTASGKTDLAIQLHQELPVEVISVDSALIYKGMDIGTAKPNAQELALTPHRLIDIKDPSENYSAAEFRRDALREMQKITQQGKIPLLVGGTMLYYKALLEGLSPLPSADEKVRLEIEQKAEKFGWATLHNELAKIDPISAQRINPNDSQRINRALEVFYLTGQSLTELTAQKGEEIPYHIIHFAIAPERAVLHQRIEQRFHKMIEQGFQQEVEKLYQRSDLHPNLPSIRCVGYRQMWEYLQGNYGKDEMIFRGICATRQLAKRQLTWLRGWKSPIEWLDSLNPKSAKEKIIKTIKHNCK.

Position 12-19 (Gly-12–Thr-19) interacts with ATP. Residue Thr-14–Thr-19 coordinates substrate. 3 interaction with substrate tRNA regions span residues Asp-37–Leu-40, Gln-161–Arg-165, and Arg-241–Arg-246.

It belongs to the IPP transferase family. Monomer. It depends on Mg(2+) as a cofactor.

It catalyses the reaction adenosine(37) in tRNA + dimethylallyl diphosphate = N(6)-dimethylallyladenosine(37) in tRNA + diphosphate. Catalyzes the transfer of a dimethylallyl group onto the adenine at position 37 in tRNAs that read codons beginning with uridine, leading to the formation of N6-(dimethylallyl)adenosine (i(6)A). The protein is tRNA dimethylallyltransferase of Histophilus somni (strain 2336) (Haemophilus somnus).